We begin with the raw amino-acid sequence, 345 residues long: UDP-N-acetylenolpyruvoylglucosamine reductase (345 aa).

Residues Leu16–Glu186 enclose the FAD-binding PCMH-type domain. Arg162 is a catalytic residue. Residue Ser232 is the Proton donor of the active site. Glu328 is a catalytic residue.

Belongs to the MurB family. FAD serves as cofactor.

The protein localises to the cytoplasm. It carries out the reaction UDP-N-acetyl-alpha-D-muramate + NADP(+) = UDP-N-acetyl-3-O-(1-carboxyvinyl)-alpha-D-glucosamine + NADPH + H(+). It functions in the pathway cell wall biogenesis; peptidoglycan biosynthesis. Cell wall formation. The polypeptide is UDP-N-acetylenolpyruvoylglucosamine reductase (Pectobacterium atrosepticum (strain SCRI 1043 / ATCC BAA-672) (Erwinia carotovora subsp. atroseptica)).